A 564-amino-acid polypeptide reads, in one-letter code: Type 2 DNA topoisomerase 6 subunit B (564 aa).

ATP is bound by residues N46, D78, 99–100, 109–116, and K471; these read TK and GQQGIGIS.

This sequence belongs to the TOP6B family. Homodimer. Heterotetramer of two Top6A and two Top6B chains.

It carries out the reaction ATP-dependent breakage, passage and rejoining of double-stranded DNA.. Its function is as follows. Relaxes both positive and negative superturns and exhibits a strong decatenase activity. This is Type 2 DNA topoisomerase 6 subunit B from Pyrococcus horikoshii (strain ATCC 700860 / DSM 12428 / JCM 9974 / NBRC 100139 / OT-3).